The primary structure comprises 222 residues: Deoxyribose-phosphate aldolase (222 aa).

D94 serves as the catalytic Proton donor/acceptor. The Schiff-base intermediate with acetaldehyde role is filled by K156. K185 functions as the Proton donor/acceptor in the catalytic mechanism.

It belongs to the DeoC/FbaB aldolase family. DeoC type 1 subfamily.

The protein resides in the cytoplasm. The catalysed reaction is 2-deoxy-D-ribose 5-phosphate = D-glyceraldehyde 3-phosphate + acetaldehyde. Its pathway is carbohydrate degradation; 2-deoxy-D-ribose 1-phosphate degradation; D-glyceraldehyde 3-phosphate and acetaldehyde from 2-deoxy-alpha-D-ribose 1-phosphate: step 2/2. Functionally, catalyzes a reversible aldol reaction between acetaldehyde and D-glyceraldehyde 3-phosphate to generate 2-deoxy-D-ribose 5-phosphate. This Malacoplasma penetrans (strain HF-2) (Mycoplasma penetrans) protein is Deoxyribose-phosphate aldolase.